Reading from the N-terminus, the 310-residue chain is AMMECR1-like protein (310 aa).

Positions 26–95 (LSGSGTHSHG…LSPLPRPNGT (70 aa)) are disordered. Positions 28 to 66 (GSGTHSHGNQSTTVPGSSSGPLQNHQHVDSSSGRENVSD) are enriched in polar residues. Ser-74 is subject to Phosphoserine. An AMMECR1 domain is found at 97 to 291 (NTTKNLVVTA…ISYAEYIASR (195 aa)).

The protein is AMMECR1-like protein (AMMECR1L) of Homo sapiens (Human).